Reading from the N-terminus, the 61-residue chain is Small ribosomal subunit protein uS14 (61 aa).

Residues C24, C27, C40, and C43 each coordinate Zn(2+).

The protein belongs to the universal ribosomal protein uS14 family. Zinc-binding uS14 subfamily. Part of the 30S ribosomal subunit. Contacts proteins S3 and S10. Requires Zn(2+) as cofactor.

Functionally, binds 16S rRNA, required for the assembly of 30S particles and may also be responsible for determining the conformation of the 16S rRNA at the A site. This chain is Small ribosomal subunit protein uS14, found in Streptococcus thermophilus (strain ATCC BAA-491 / LMD-9).